Consider the following 123-residue polypeptide: Angiogenin-2 (123 aa).

A Pyrrolidone carboxylic acid modification is found at Gln-1. The active-site Proton acceptor is His-12. Cystine bridges form between Cys-25/Cys-80, Cys-38/Cys-91, and Cys-56/Cys-106. The short motif at 30 to 34 (ERRNM) is the Nucleolar localization signal element. Asn-33 carries an N-linked (GlcNAc...) asparagine glycan. Zn(2+) is bound by residues Asp-40, His-82, and His-113. His-113 functions as the Proton donor in the catalytic mechanism.

The protein belongs to the pancreatic ribonuclease family. In terms of tissue distribution, serum and milk.

The protein resides in the cytoplasmic vesicle. It localises to the secretory vesicle lumen. The protein localises to the secreted. It is found in the nucleus. Its subcellular location is the nucleolus. With respect to regulation, divalent metal ions, such as Cu2+ and Zn2+, may inhibit the ribonucleolytic activity. Binds tightly to placental ribonuclease inhibitor and has very low ribonuclease activity. Has potent angiogenic activity. Angiogenin induces vascularization of normal and malignant tissues. Abolishes protein synthesis by specifically hydrolyzing cellular tRNAs. The chain is Angiogenin-2 from Bos taurus (Bovine).